A 167-amino-acid polypeptide reads, in one-letter code: Small ribosomal subunit protein uS5 (167 aa).

The S5 DRBM domain occupies 12 to 75 (LEERVVTINR…EDAKKNMVLV (64 aa)).

It belongs to the universal ribosomal protein uS5 family. As to quaternary structure, part of the 30S ribosomal subunit. Contacts proteins S4 and S8.

Functionally, with S4 and S12 plays an important role in translational accuracy. Located at the back of the 30S subunit body where it stabilizes the conformation of the head with respect to the body. This Listeria monocytogenes serotype 4b (strain F2365) protein is Small ribosomal subunit protein uS5.